Here is a 137-residue protein sequence, read N- to C-terminus: Integration host factor subunit beta (137 aa).

The segment covering 75-92 has biased composition (basic and acidic residues); it reads KRVPHFKAGKELRERVDR. The segment at 75–137 is disordered; the sequence is KRVPHFKAGK…EGGGLNLARS (63 aa). Gly residues predominate over residues 128-137; sequence EGGGLNLARS.

Belongs to the bacterial histone-like protein family. As to quaternary structure, heterodimer of an alpha and a beta chain.

This protein is one of the two subunits of integration host factor, a specific DNA-binding protein that functions in genetic recombination as well as in transcriptional and translational control. The chain is Integration host factor subunit beta from Cupriavidus pinatubonensis (strain JMP 134 / LMG 1197) (Cupriavidus necator (strain JMP 134)).